Reading from the N-terminus, the 122-residue chain is MRYRYPWFYVYPYEVRRPPAPANNIDTFIRSAKQAAGIFADAQLVLSRIAGSRELSRRILTAAEQSDKQTIRRLIKQMGVRHEVDTVFNPDGIYISLIGTQSRMILALRWSEDRNHFASIRL.

This is an uncharacterized protein from Bacillus subtilis (strain 168).